The sequence spans 418 residues: Translation initiation factor 2 subunit gamma (418 aa).

One can recognise a tr-type G domain in the interval 7-206 (QPEVNIGVVG…GIQKYIPTPQ (200 aa)). The G1 stretch occupies residues 16–23 (GHVDHGKT). Positions 19, 23, 44, and 46 each coordinate Mg(2+). A GTP-binding site is contributed by 19-24 (DHGKTT). The segment at 44 to 48 (GMTIK) is G2. Zn(2+) is bound by residues C59, C62, C74, and C77. A G3 region spans residues 93–96 (DAPG). Residues 149 to 152 (NKVD) and 184 to 186 (SAL) contribute to the GTP site. Positions 149 to 152 (NKVD) are G4. The tract at residues 184-186 (SAL) is G5.

Belongs to the TRAFAC class translation factor GTPase superfamily. Classic translation factor GTPase family. EIF2G subfamily. In terms of assembly, heterotrimer composed of an alpha, a beta and a gamma chain. The cofactor is Mg(2+).

The catalysed reaction is GTP + H2O = GDP + phosphate + H(+). EIF-2 functions in the early steps of protein synthesis by forming a ternary complex with GTP and initiator tRNA. The chain is Translation initiation factor 2 subunit gamma from Sulfurisphaera tokodaii (strain DSM 16993 / JCM 10545 / NBRC 100140 / 7) (Sulfolobus tokodaii).